The following is a 204-amino-acid chain: Casparian strip membrane protein 2 (204 aa).

At Met-1–Gly-42 the chain is on the cytoplasmic side. The chain crosses the membrane as a helical span at residues Leu-43 to Ala-63. The Extracellular segment spans residues Thr-64 to Gln-92. The helical transmembrane segment at Phe-93–Val-113 threads the bilayer. The Cytoplasmic portion of the chain corresponds to Val-114 to Arg-125. A helical transmembrane segment spans residues Leu-126–Ala-146. Residues Ala-147–Gly-178 are Extracellular-facing. The helical transmembrane segment at Ala-179–Val-199 threads the bilayer. The Cytoplasmic segment spans residues Ala-200–His-204.

It belongs to the Casparian strip membrane proteins (CASP) family. Homodimer and heterodimers with other CASP proteins. Interacts with CASP1, CASP3 and CASP4.

Its subcellular location is the cell membrane. Its function is as follows. Regulates membrane-cell wall junctions and localized cell wall deposition. Required for establishment of the Casparian strip membrane domain (CSD) and the subsequent formation of Casparian strips, a cell wall modification of the root endodermis that determines an apoplastic barrier between the intraorganismal apoplasm and the extraorganismal apoplasm and prevents lateral diffusion. The chain is Casparian strip membrane protein 2 (CASP2) from Arabidopsis thaliana (Mouse-ear cress).